The following is a 240-amino-acid chain: Phosphoribosylaminoimidazole-succinocarboxamide synthase (240 aa).

Belongs to the SAICAR synthetase family.

The enzyme catalyses 5-amino-1-(5-phospho-D-ribosyl)imidazole-4-carboxylate + L-aspartate + ATP = (2S)-2-[5-amino-1-(5-phospho-beta-D-ribosyl)imidazole-4-carboxamido]succinate + ADP + phosphate + 2 H(+). Its pathway is purine metabolism; IMP biosynthesis via de novo pathway; 5-amino-1-(5-phospho-D-ribosyl)imidazole-4-carboxamide from 5-amino-1-(5-phospho-D-ribosyl)imidazole-4-carboxylate: step 1/2. The sequence is that of Phosphoribosylaminoimidazole-succinocarboxamide synthase from Anoxybacillus flavithermus (strain DSM 21510 / WK1).